The sequence spans 80 residues: MPRKFDVLEHELVPKHVLLSKEEANRLLKAMGLKKSELPWIYSTDPVARALKAKPGDVIMIIRQSPTAGESVAFRLVMRG.

It belongs to the archaeal Rpo5/eukaryotic RPB5 RNA polymerase subunit family. Part of the RNA polymerase complex.

It is found in the cytoplasm. It carries out the reaction RNA(n) + a ribonucleoside 5'-triphosphate = RNA(n+1) + diphosphate. DNA-dependent RNA polymerase (RNAP) catalyzes the transcription of DNA into RNA using the four ribonucleoside triphosphates as substrates. The chain is DNA-directed RNA polymerase subunit Rpo5 from Thermofilum pendens (strain DSM 2475 / Hrk 5).